We begin with the raw amino-acid sequence, 207 residues long: MAKTYDYLFKLLLIGDSGVGKTCVLFRFSEDAFNSTFISTIGIDFKIRTIELDGKRIKLQIWDTAGQERFRTITTAYYRGAMGIMLVYDITNEKSFDNIRNWIRNIEEHASADVEKMILGNKCDVNDKRQVSKERGEKLALDYGIKFMETSAKANINVENAFFTLARDIKAKMDKKLEGNSPQGSNQGVKITPDQQKRSSFFRCVLL.

GTP contacts are provided by Ser-17, Gly-18, Val-19, Gly-20, Lys-21, Thr-22, Cys-23, Ser-35, Ser-39, and Thr-40. Residue Thr-22 participates in Mg(2+) binding. 2 consecutive short sequence motifs (switch) follow at residues Asp-31 to Phe-45 and Asp-63 to Gly-80. Mg(2+)-binding residues include Thr-40 and Asp-63. Gly-66 contacts GTP. Thr-72 carries the phosphothreonine modification. GTP contacts are provided by Asn-121, Lys-122, Asp-124, Ala-152, and Lys-153. 2 positions are modified to phosphoserine: Ser-181 and Ser-185. Cys-204 bears the Cysteine methyl ester mark. Cys-204 carries the S-geranylgeranyl cysteine lipid modification. The propeptide at Val-205–Leu-207 is removed in mature form.

This sequence belongs to the small GTPase superfamily. Rab family. Interacts (GTP-bound form) with MICALL1; regulates RAB8A association with recycling endosomes. Interacts with MICALL2; competes with RAB13 and is involved in E-cadherin endocytic recycling. Interacts (GTP-bound form) with MICAL1, MICALCL, MICAL3, EHBP1 and EHBP1L1; at least in case of MICAL1, MICALCL, MICAL3 and EHBP1L1 two molecules of RAB8A can bind to one molecule of the effector protein; ternary complexes of RAB8A, RAB13 and either MICAL1 or EHBP1L1 are possible. Interacts with EHD1. Interacts with MAP4K2 and SYTL4. Interacts with SGSM1 and SGSM3. Interacts with RABIF, RIMS2, RPH3A and RPH3A. Interacts with OPTN. Interacts with RAB3IP, RAB3IP functions as guanine exchange factor (GEF). Interacts with MYO5B. Interacts with CIMAP3. Interacts with BIRC6/bruce. Interacts with OCRL. Interacts with AHI1. Interacts with DCDC1. Interacts with LRRK2; interaction facilitates phosphorylation of Thr-72. Interacts with RAB31P, GDI1, GDI2, CHM, CHML, RABGGTA, RABGGTB, TBC1D15 and INPP5B; these interactions are dependent on Thr-72 not being phosphorylated. Interacts with RILPL1 and RILPL2; these interactions are dependent on the phosphorylation of Thr-72 by LRRK2. Interacts with DZIP1; prevents inhibition by the GDP-dissociation inhibitor GDI2. Interacts (in GDP-bound form) with RAB3IP/Rabin8, RAB3IP functions as guanine exchange factor (GEF) towards RAB8A. Interacts (in GDP-bound form) with RPGR, RPGR functions as GEF towards RAB8A. It depends on Mg(2+) as a cofactor. Phosphorylation of Thr-72 in the switch II region by LRRK2 prevents the association of RAB regulatory proteins, including CHM, CHML and RAB GDP dissociation inhibitors GDI1 and GDI2. Phosphorylation by LRRK2 is required for localization to stressed lysosomes.

Its subcellular location is the cell membrane. The protein resides in the golgi apparatus. It is found in the endosome membrane. It localises to the recycling endosome membrane. The protein localises to the cell projection. Its subcellular location is the cilium. The protein resides in the cytoplasmic vesicle. It is found in the phagosome membrane. It localises to the cytoplasm. The protein localises to the cytoskeleton. Its subcellular location is the microtubule organizing center. The protein resides in the centrosome. It is found in the centriole. It localises to the cilium basal body. The protein localises to the midbody. Its subcellular location is the lysosome. It carries out the reaction GTP + H2O = GDP + phosphate + H(+). With respect to regulation, regulated by guanine nucleotide exchange factors (GEFs) such as RAB3IP/Rabin8 and RPGR which promote the exchange of bound GDP for free GTP, GTPase activating proteins (GAPs) which increase the GTP hydrolysis activity, and GDP dissociation inhibitors (GDIs) which inhibit the dissociation of the nucleotide from the GTPase. Activated in response to insulin. In terms of biological role, the small GTPases Rab are key regulators of intracellular membrane trafficking, from the formation of transport vesicles to their fusion with membranes. Rabs cycle between an inactive GDP-bound form and an active GTP-bound form that is able to recruit to membranes different sets of downstream effectors directly responsible for vesicle formation, movement, tethering and fusion. RAB8A is involved in polarized vesicular trafficking and neurotransmitter release. Together with RAB11A, RAB3IP, the exocyst complex, PARD3, PRKCI, ANXA2, CDC42 and DNMBP promotes transcytosis of PODXL to the apical membrane initiation sites (AMIS), apical surface formation and lumenogenesis. Regulates the compacted morphology of the Golgi. Together with MYO5B and RAB11A participates in epithelial cell polarization. Also involved in membrane trafficking to the cilium and ciliogenesis. Together with MICALL2, may also regulate adherens junction assembly. May play a role in insulin-induced transport to the plasma membrane of the glucose transporter GLUT4 and therefore play a role in glucose homeostasis. Involved in autophagy. Participates in the export of a subset of neosynthesized proteins through a Rab8-Rab10-Rab11-dependent endososomal export route. Targeted to and stabilized on stressed lysosomes through LRRK2 phosphorylation. Suppresses stress-induced lysosomal enlargement through EHBP1 and EHNP1L1 effector proteins. This chain is Ras-related protein Rab-8A (RAB8A), found in Canis lupus familiaris (Dog).